Consider the following 296-residue polypeptide: Formamidopyrimidine-DNA glycosylase (296 aa).

P2 acts as the Schiff-base intermediate with DNA in catalysis. E3 (proton donor) is an active-site residue. The active-site Proton donor; for beta-elimination activity is the K58. 3 residues coordinate DNA: H104, R126, and K169. An FPG-type zinc finger spans residues 260-296; sequence SVYDRAGEACRKPGCDGTVTRIVQAGRSTFHCPRCQK. Catalysis depends on R286, which acts as the Proton donor; for delta-elimination activity.

The protein belongs to the FPG family. Monomer. Zn(2+) serves as cofactor.

The enzyme catalyses Hydrolysis of DNA containing ring-opened 7-methylguanine residues, releasing 2,6-diamino-4-hydroxy-5-(N-methyl)formamidopyrimidine.. It catalyses the reaction 2'-deoxyribonucleotide-(2'-deoxyribose 5'-phosphate)-2'-deoxyribonucleotide-DNA = a 3'-end 2'-deoxyribonucleotide-(2,3-dehydro-2,3-deoxyribose 5'-phosphate)-DNA + a 5'-end 5'-phospho-2'-deoxyribonucleoside-DNA + H(+). In terms of biological role, involved in base excision repair of DNA damaged by oxidation or by mutagenic agents. Acts as a DNA glycosylase that recognizes and removes damaged bases. Has a preference for oxidized purines, such as 7,8-dihydro-8-oxoguanine (8-oxoG). Has AP (apurinic/apyrimidinic) lyase activity and introduces nicks in the DNA strand. Cleaves the DNA backbone by beta-delta elimination to generate a single-strand break at the site of the removed base with both 3'- and 5'-phosphates. This chain is Formamidopyrimidine-DNA glycosylase, found in Sinorhizobium fredii (strain NBRC 101917 / NGR234).